Reading from the N-terminus, the 146-residue chain is 3-hydroxyacyl-[acyl-carrier-protein] dehydratase FabZ (146 aa).

Residue His49 is part of the active site.

Belongs to the thioester dehydratase family. FabZ subfamily.

Its subcellular location is the cytoplasm. It catalyses the reaction a (3R)-hydroxyacyl-[ACP] = a (2E)-enoyl-[ACP] + H2O. Involved in unsaturated fatty acids biosynthesis. Catalyzes the dehydration of short chain beta-hydroxyacyl-ACPs and long chain saturated and unsaturated beta-hydroxyacyl-ACPs. In Pseudomonas fluorescens (strain Pf0-1), this protein is 3-hydroxyacyl-[acyl-carrier-protein] dehydratase FabZ.